Reading from the N-terminus, the 179-residue chain is uncharacterized protein (179 aa).

Residues 160-179 (QPIEPNGTQPATETKTPVGV) are disordered. Polar residues predominate over residues 165–179 (NGTQPATETKTPVGV).

The protein belongs to the Dps family.

This is an uncharacterized protein from Anabaena variabilis.